The chain runs to 26 residues: Guentherin (26 aa).

Expressed by the skin glands.

The protein resides in the secreted. In terms of biological role, antimicrobial peptide. Active against the Gram-positive bacteria S.aureus FDA209P (MIC=35.5 ug/ml) and B.subtilis ATCC 6633 (MIC&gt;64 ug/ml), but not active against the Gram-negative bacterium E.coli or the fungus C.albicans. The chain is Guentherin from Sylvirana guentheri (Gunther's frog).